The chain runs to 657 residues: PAN2-PAN3 deadenylation complex subunit PAN3 (657 aa).

3 disordered regions span residues 1–29 (MASAGKPNIDDGRRGTSSPKLKGRDHAKD), 52–98 (HDPS…SATI), and 115–135 (SRSNAATPQSQPETSTPEWSI). The segment at 27-55 (AKDTLCRNVTIYGRCRYEDKGCVFNHDPS) adopts a C3H1-type zinc-finger fold. Positions 52-67 (HDPSRVNDAQHPERSS) are enriched in basic and acidic residues. 2 stretches are compositionally biased toward polar residues: residues 75–98 (DSPSFTPSATPLNGSSGLKKSATI) and 115–132 (SRSNAATPQSQPETSTPE). The pseudokinase domain stretch occupies residues 259-521 (QTLPNSQLPT…TIDIFISGIS (263 aa)). ATP is bound by residues arginine 311, 360 to 367 (DYHPLSKT), and 421 to 422 (SK). Residues 522-560 (SQLMSTFDSSLHLDDQLISDLSRELENARLVRLLTKLNF) are a coiled coil. The tract at residues 561-657 (INERPEYEHD…QALLKPARRI (97 aa)) is knob domain.

The protein belongs to the protein kinase superfamily. PAN3 family. In terms of assembly, homodimer. Forms a heterotrimer with a catalytic subunit PAN2 to form the poly(A)-nuclease (PAN) deadenylation complex. Interacts (via PAM-2 motif) with poly(A)-binding protein PAB1 (via PABC domain), conferring substrate specificity of the enzyme complex.

It is found in the cytoplasm. Functionally, regulatory subunit of the poly(A)-nuclease (PAN) deadenylation complex, one of two cytoplasmic mRNA deadenylases involved in mRNA turnover. PAN specifically shortens poly(A) tails of RNA and the activity is stimulated by poly(A)-binding protein PAB1. PAN deadenylation is followed by rapid degradation of the shortened mRNA tails by the CCR4-NOT complex. Deadenylated mRNAs are then degraded by two alternative mechanisms, namely exosome-mediated 3'-5' exonucleolytic degradation, or deadenylation-dependent mRNA decaping and subsequent 5'-3' exonucleolytic degradation by XRN1. May also be involved in post-transcriptional maturation of mRNA poly(A) tails. PAN3 acts as a positive regulator for PAN activity, recruiting the catalytic subunit PAN2 to mRNA via its interaction with RNA and with PAB1. The chain is PAN2-PAN3 deadenylation complex subunit PAN3 from Coccidioides immitis (strain RS) (Valley fever fungus).